The primary structure comprises 121 residues: Small ribosomal subunit protein uS13 (121 aa).

Residues 92 to 121 (HKAGLPVRGQKTHSNARTRKGPRLTKIKKR) form a disordered region. A compositionally biased stretch (basic residues) spans 101-121 (QKTHSNARTRKGPRLTKIKKR).

It belongs to the universal ribosomal protein uS13 family. Part of the 30S ribosomal subunit. Forms a loose heterodimer with protein S19. Forms two bridges to the 50S subunit in the 70S ribosome.

In terms of biological role, located at the top of the head of the 30S subunit, it contacts several helices of the 16S rRNA. In the 70S ribosome it contacts the 23S rRNA (bridge B1a) and protein L5 of the 50S subunit (bridge B1b), connecting the 2 subunits; these bridges are implicated in subunit movement. Contacts the tRNAs in the A and P-sites. The sequence is that of Small ribosomal subunit protein uS13 from Petrotoga mobilis (strain DSM 10674 / SJ95).